Reading from the N-terminus, the 691-residue chain is DNA ligase (691 aa).

NAD(+) is bound by residues 41–45 (DAEYD), 90–91 (SL), and E130. K132 functions as the N6-AMP-lysine intermediate in the catalytic mechanism. R153, E190, K307, and K331 together coordinate NAD(+). Residues C425, C428, C443, and C449 each contribute to the Zn(2+) site. Residues 610–691 (APQGVLAGKT…LHQLLEGNTP (82 aa)) form the BRCT domain.

Belongs to the NAD-dependent DNA ligase family. LigA subfamily. It depends on Mg(2+) as a cofactor. Requires Mn(2+) as cofactor.

The catalysed reaction is NAD(+) + (deoxyribonucleotide)n-3'-hydroxyl + 5'-phospho-(deoxyribonucleotide)m = (deoxyribonucleotide)n+m + AMP + beta-nicotinamide D-nucleotide.. Functionally, DNA ligase that catalyzes the formation of phosphodiester linkages between 5'-phosphoryl and 3'-hydroxyl groups in double-stranded DNA using NAD as a coenzyme and as the energy source for the reaction. It is essential for DNA replication and repair of damaged DNA. The sequence is that of DNA ligase from Burkholderia cenocepacia (strain HI2424).